The primary structure comprises 287 residues: Pyridoxal 5'-phosphate synthase subunit PdxS (287 aa).

D21 contacts D-ribose 5-phosphate. K78 (schiff-base intermediate with D-ribose 5-phosphate) is an active-site residue. Residue G150 participates in D-ribose 5-phosphate binding. R162 lines the D-glyceraldehyde 3-phosphate pocket. Residues G211 and 232 to 233 (GS) each bind D-ribose 5-phosphate.

It belongs to the PdxS/SNZ family. In terms of assembly, in the presence of PdxT, forms a dodecamer of heterodimers.

The enzyme catalyses aldehydo-D-ribose 5-phosphate + D-glyceraldehyde 3-phosphate + L-glutamine = pyridoxal 5'-phosphate + L-glutamate + phosphate + 3 H2O + H(+). The protein operates within cofactor biosynthesis; pyridoxal 5'-phosphate biosynthesis. Functionally, catalyzes the formation of pyridoxal 5'-phosphate from ribose 5-phosphate (RBP), glyceraldehyde 3-phosphate (G3P) and ammonia. The ammonia is provided by the PdxT subunit. Can also use ribulose 5-phosphate and dihydroxyacetone phosphate as substrates, resulting from enzyme-catalyzed isomerization of RBP and G3P, respectively. The chain is Pyridoxal 5'-phosphate synthase subunit PdxS from Tropheryma whipplei (strain TW08/27) (Whipple's bacillus).